A 171-amino-acid polypeptide reads, in one-letter code: Co-chaperone protein HscB (171 aa).

One can recognise a J domain in the interval 2–74 (DYFTLFGLPA…LTRAEYLLSL (73 aa)).

Belongs to the HscB family. As to quaternary structure, interacts with HscA and stimulates its ATPase activity. Interacts with IscU.

Functionally, co-chaperone involved in the maturation of iron-sulfur cluster-containing proteins. Seems to help targeting proteins to be folded toward HscA. This chain is Co-chaperone protein HscB, found in Klebsiella pneumoniae subsp. pneumoniae (strain ATCC 700721 / MGH 78578).